A 187-amino-acid chain; its full sequence is GTP cyclohydrolase 1 (187 aa).

Zn(2+) is bound by residues C76, H79, and C148.

It belongs to the GTP cyclohydrolase I family. Toroid-shaped homodecamer, composed of two pentamers of five dimers.

It carries out the reaction GTP + H2O = 7,8-dihydroneopterin 3'-triphosphate + formate + H(+). It functions in the pathway cofactor biosynthesis; 7,8-dihydroneopterin triphosphate biosynthesis; 7,8-dihydroneopterin triphosphate from GTP: step 1/1. The protein is GTP cyclohydrolase 1 of Streptococcus thermophilus (strain CNRZ 1066).